The chain runs to 662 residues: Zinc finger protein 17 (662 aa).

Positions 8-101 (MVFEDVAIHF…LLKDILHLAE (94 aa)) constitute a KRAB domain. 16 C2H2-type zinc fingers span residues 190 to 212 (YSCTQCGKDFCHQHTLFEHQKIH), 218 to 240 (YECSECGKLFRYNSDLIKHQRNH), 246 to 268 (YKCSECGKAFSLKYNVVQHQKIH), 274 to 296 (YECSECGKAFLRKSHLLQHQRIH), 302 to 324 (YVCSECGKAFLTQAHLVGHQKIH), 358 to 380 (FYCCECGKFFMDSCTLIIHQRVH), 386 to 408 (YECNECGKFFRYRSTLIRHQKVH), 414 to 436 (YECSECGKFFMDTSTLIIHQRVH), 442 to 464 (YECNKCGKFFRYCFTLNRHQRVH), 470 to 492 (YECSECGKFFVDSCTLKSHQRVH), 498 to 520 (FECSICGKSFRCRSTLDTHQRIH), 526 to 548 (YECSECGKFFRHNSNHIRHRRNH), 554 to 576 (FECTECGRVFSQNSHLIRHQKVH), 582 to 604 (YKCSKCGKFFMDSSTLISHERVH), 610 to 632 (YECSECGKVFRYNSSLIKHRRIH), and 638 to 660 (YQCSECGRVFNQNSHLIQHQKVH).

This sequence belongs to the krueppel C2H2-type zinc-finger protein family.

It is found in the nucleus. Functionally, may be involved in transcriptional regulation. The polypeptide is Zinc finger protein 17 (ZNF17) (Homo sapiens (Human)).